A 472-amino-acid polypeptide reads, in one-letter code: Transcriptional activator protein rec16 (472 aa).

Residues 420-444 (FICCYCTKPFLSISKLQEHESSCSH) form a C2H2-type zinc finger.

It is found in the nucleus. Functionally, transcriptional activator that controls the onset of premeiotic DNA synthesis by regulating res2 and some other factor(s) in a mei2 independent cascade. The chain is Transcriptional activator protein rec16 (rec16) from Schizosaccharomyces pombe (strain 972 / ATCC 24843) (Fission yeast).